The primary structure comprises 379 residues: Intracellular hyaluronan-binding protein 4.S (379 aa).

2 disordered regions span residues 52–260 and 332–379; these read THRK…FSQE and SLAR…PALA. Over residues 71-81 the composition is skewed to basic and acidic residues; it reads GKKESQKDRKA. The segment covering 107-116 has biased composition (polar residues); it reads KVTQNENVDS. 2 stretches are compositionally biased toward basic and acidic residues: residues 118 to 133 and 139 to 158; these read VKVD…REVR and RSAE…DKQM. The segment covering 162–174 has biased composition (gly residues); sequence GGRGGMRGRGRGG. Residues 179 to 208 are compositionally biased toward basic and acidic residues; that stretch reads TESDNLRGKREFDRHSGSDRARMRPEDKRG. Composition is skewed to acidic residues over residues 232–241 and 368–379; these read EQVETTETEA and NPDDPEDFPALA.

The protein belongs to the SERBP1-HABP4 family. Associates with ribosomes; promoting ribosome stabilization. Interacts with eef2/eEF2; promoting ribosome stabilization.

Its subcellular location is the nucleus. The protein localises to the cytoplasm. The protein resides in the stress granule. It is found in the nucleolus. It localises to the nucleus speckle. Its subcellular location is the cajal body. Ribosome-binding protein that promotes ribosome hibernation, a process during which ribosomes are stabilized in an inactive state and preserved from proteasomal degradation. Acts via its association with eef2/eEF2 factor at the A-site of the ribosome, promoting ribosome stabilization in an inactive state compatible with storage. Plays a key role in ribosome hibernation in the mature egg by promoting ribosome stabilization. Ribosomes, which are produced in large quantities during oogenesis, are stored and translationally repressed in the egg and early embryo. This Xenopus laevis (African clawed frog) protein is Intracellular hyaluronan-binding protein 4.S.